A 668-amino-acid polypeptide reads, in one-letter code: Ras guanine nucleotide exchange factor D (668 aa).

In terms of domain architecture, Rho-GAP spans 27-224 (KKLESIFGIA…LMVMDIDEFD (198 aa)). The N-terminal Ras-GEF domain occupies 237–362 (GESIVKAATF…YFQTFFKPVI (126 aa)). Residues 433–663 (GSNIIAQQIT…HSISHKLEPR (231 aa)) enclose the Ras-GEF domain.

Promotes the exchange of Ras-bound GDP by GTP. This is Ras guanine nucleotide exchange factor D (gefD) from Dictyostelium discoideum (Social amoeba).